The primary structure comprises 76 residues: Sec-independent protein translocase protein TatA (76 aa).

The helical transmembrane segment at 1–21 threads the bilayer; that stretch reads MGSFSIWHWLIVLVIVALVFG. Basic and acidic residues-rich tracts occupy residues 39–50 and 64–76; these read FKDGMKGEDDKP and GTVD…KSNS. Residues 39–76 are disordered; it reads FKDGMKGEDDKPAAQNAAPSQVADKGTVDVEVKEKSNS.

This sequence belongs to the TatA/E family. The Tat system comprises two distinct complexes: a TatABC complex, containing multiple copies of TatA, TatB and TatC subunits, and a separate TatA complex, containing only TatA subunits. Substrates initially bind to the TatABC complex, which probably triggers association of the separate TatA complex to form the active translocon.

Its subcellular location is the cell inner membrane. Its function is as follows. Part of the twin-arginine translocation (Tat) system that transports large folded proteins containing a characteristic twin-arginine motif in their signal peptide across membranes. TatA could form the protein-conducting channel of the Tat system. This chain is Sec-independent protein translocase protein TatA, found in Herminiimonas arsenicoxydans.